Here is a 303-residue protein sequence, read N- to C-terminus: Putative S-adenosyl-L-methionine-dependent methyltransferase Mb1931c (303 aa).

S-adenosyl-L-methionine contacts are provided by residues D129 and 158-159; that span reads DL.

This sequence belongs to the UPF0677 family.

Its function is as follows. Exhibits S-adenosyl-L-methionine-dependent methyltransferase activity. The chain is Putative S-adenosyl-L-methionine-dependent methyltransferase Mb1931c from Mycobacterium bovis (strain ATCC BAA-935 / AF2122/97).